The primary structure comprises 161 residues: MENEPDTICILVDADACPVKAEIYRVAERHNLPVVIVANSFIAIPREAQRVERVVVSGNLDAADDWIAEHSRPGAVVVTADIPLASRALEKGASVIAPNGRIHTQSTIGNTLATRNLMDSLRSAGEVTGGPAPFAPKDRSAFLSALDLAIVRLKRAGFHAS.

Belongs to the UPF0178 family.

This chain is UPF0178 protein BOV_1904, found in Brucella ovis (strain ATCC 25840 / 63/290 / NCTC 10512).